The following is a 517-amino-acid chain: Type II methyltransferase M.CeqI (517 aa).

2 disordered regions span residues M1–R21 and G33–S62. Residues R51–S62 are compositionally biased toward basic residues. 3 TPR repeats span residues A283 to N316, A361 to S394, and S476 to M509.

It carries out the reaction a 2'-deoxyadenosine in DNA + S-adenosyl-L-methionine = an N(6)-methyl-2'-deoxyadenosine in DNA + S-adenosyl-L-homocysteine + H(+). A methylase, recognizes the double-stranded sequence 5'-GATATC-3', methylates A-? on both strands, and protects the DNA from cleavage by the CeqI endonuclease. The chain is Type II methyltransferase M.CeqI (ceqIM) from Rhodococcus hoagii (Corynebacterium equii).